The following is a 64-amino-acid chain: Small ribosomal subunit protein bS21 (64 aa).

Belongs to the bacterial ribosomal protein bS21 family.

The polypeptide is Small ribosomal subunit protein bS21 (Sulfurihydrogenibium sp. (strain YO3AOP1)).